Consider the following 74-residue polypeptide: NAD(P)H-quinone oxidoreductase subunit L (74 aa).

A run of 2 helical transmembrane segments spans residues 5–25 and 43–63; these read LIIA…VPAA and AFMY…APLL.

Belongs to the complex I NdhL subunit family. NDH-1 can be composed of about 15 different subunits; different subcomplexes with different compositions have been identified which probably have different functions.

The protein resides in the cellular thylakoid membrane. The catalysed reaction is a plastoquinone + NADH + (n+1) H(+)(in) = a plastoquinol + NAD(+) + n H(+)(out). The enzyme catalyses a plastoquinone + NADPH + (n+1) H(+)(in) = a plastoquinol + NADP(+) + n H(+)(out). In terms of biological role, NDH-1 shuttles electrons from an unknown electron donor, via FMN and iron-sulfur (Fe-S) centers, to quinones in the respiratory and/or the photosynthetic chain. The immediate electron acceptor for the enzyme in this species is believed to be plastoquinone. Couples the redox reaction to proton translocation, and thus conserves the redox energy in a proton gradient. Cyanobacterial NDH-1 also plays a role in inorganic carbon-concentration. This is NAD(P)H-quinone oxidoreductase subunit L from Synechococcus elongatus (strain ATCC 33912 / PCC 7942 / FACHB-805) (Anacystis nidulans R2).